A 461-amino-acid chain; its full sequence is Cyclic AMP-responsive element-binding protein 3-like protein 3 (461 aa).

Over 1 to 322 (MNTDLAAGKM…STSKSAQTGT (322 aa)) the chain is Cytoplasmic. Positions 51-120 (DQQVLPNPDS…AGCHPAQPGK (70 aa)) are disordered. Low complexity predominate over residues 63 to 85 (FLSSILGSGDSLPSSPLWSPEGS). Phosphoserine is present on S173. One can recognise a bZIP domain in the interval 243–306 (VLKKIRRKIR…LSLLEQLKKL (64 aa)). The interval 245-274 (KKIRRKIRNKQSAQESRKKKKEYIDGLETR) is basic motif. The tract at residues 285–306 (LQRKVLHLEKQNLSLLEQLKKL) is leucine-zipper. Residue K294 forms a Glycyl lysine isopeptide (Lys-Gly) (interchain with G-Cter in ubiquitin) linkage. Residues 323–343 (CVAVLLLSFALIILPSISPFG) form a helical; Signal-anchor for type II membrane protein membrane-spanning segment. The Lumenal segment spans residues 344 to 461 (PNKTESPGDF…AGLEAAGDEL (118 aa)). The tract at residues 370–408 (RVAADAVPGSEAPGPRPEADTTREESPGSPGADWGFQDT) is disordered. S379 carries an O-linked (GalNAc...) serine glycan. The segment covering 386-395 (PEADTTREES) has biased composition (basic and acidic residues). N-linked (GlcNAc...) asparagine glycosylation is found at N410, N413, N420, and N427. Residues 442–461 (APGPSTGSGRAGLEAAGDEL) are disordered.

It belongs to the bZIP family. ATF subfamily. Binds DNA as a dimer. May form homodimers. Interacts with ATF6. Interacts with SYNV1/HRD1; this interaction leads to CREB3L3 ubiquitination and proteasomal degradation. In terms of processing, controlled by regulated intramembrane proteolysis (RIP). Following ER stress a fragment containing the cytoplasmic transcription factor domain is released by proteolysis. The cleavage seems to be performed sequentially by site-1 and site-2 proteases (PS1 and PS2). Post-translationally, N- and O-glycosylated. N-glycosylation is required for optimal proteolytic activation. O-glycosylated with core 1 or possibly core 8 glycans. Ubiquitinated at Lys-294 by SYNV1/HRD1 via 'Lys-27'-linked ubiquitin. Exclusively expressed in liver. Underexpressed in hepatocellular carcinoma tissues.

It localises to the endoplasmic reticulum membrane. Its subcellular location is the nucleus. Its function is as follows. Transcription factor that may act during endoplasmic reticulum stress by activating unfolded protein response target genes. Activated in response to cAMP stimulation. In vitro, binds to the cAMP response element (CRE) and box-B element. Activates transcription through box-B element. Activates transcription through CRE. May function synergistically with ATF6. In acute inflammatory response, may activate expression of acute phase response (APR) genes. May be involved in growth suppression. Regulates FGF21 transcription. Plays a crucial role in the regulation of triglyceride metabolism and is required for the maintenance of normal plasma triglyceride concentrations. This Homo sapiens (Human) protein is Cyclic AMP-responsive element-binding protein 3-like protein 3 (CREB3L3).